A 200-amino-acid chain; its full sequence is MSRYTGPSWKLSRRLGVSLSGTGKELAKRPYAPGQHGPNQRKKLSEYALQLHEKQKLRHMYGVNERQFLRTFNDAGKMNGIHGENFMILLESRLDNLVYRMGLARTRRAARQLVNHGHVLVDGSRVDIPSYRVKPGQTIGLRERSRNLTVVKEALDVNDFTPGYVSFDEEKLEGTYTRYPERSELPAEITEALIVEWYSR.

Positions 92–155 (SRLDNLVYRM…RNLTVVKEAL (64 aa)) constitute an S4 RNA-binding domain.

Belongs to the universal ribosomal protein uS4 family. As to quaternary structure, part of the 30S ribosomal subunit. Contacts protein S5. The interaction surface between S4 and S5 is involved in control of translational fidelity.

Functionally, one of the primary rRNA binding proteins, it binds directly to 16S rRNA where it nucleates assembly of the body of the 30S subunit. In terms of biological role, with S5 and S12 plays an important role in translational accuracy. The sequence is that of Small ribosomal subunit protein uS4 from Shouchella clausii (strain KSM-K16) (Alkalihalobacillus clausii).